The primary structure comprises 327 residues: Putative cyclin-dependent kinase F-2 (327 aa).

The Protein kinase domain occupies 4–295; the sequence is YECLGKIGEG…AADALRCAWF (292 aa). ATP contacts are provided by residues 10-18 and K33; that span reads IGEGAAGVV. D134 (proton acceptor) is an active-site residue. A Phosphothreonine modification is found at T167.

It belongs to the protein kinase superfamily. CMGC Ser/Thr protein kinase family. CDC2/CDKX subfamily.

It carries out the reaction L-seryl-[protein] + ATP = O-phospho-L-seryl-[protein] + ADP + H(+). The catalysed reaction is L-threonyl-[protein] + ATP = O-phospho-L-threonyl-[protein] + ADP + H(+). It catalyses the reaction [DNA-directed RNA polymerase] + ATP = phospho-[DNA-directed RNA polymerase] + ADP + H(+). The chain is Putative cyclin-dependent kinase F-2 (CDKF-2) from Oryza sativa subsp. japonica (Rice).